The chain runs to 367 residues: Phosphoribosylaminoimidazole-succinocarboxamide synthase (367 aa).

It belongs to the SAICAR synthetase family.

It carries out the reaction 5-amino-1-(5-phospho-D-ribosyl)imidazole-4-carboxylate + L-aspartate + ATP = (2S)-2-[5-amino-1-(5-phospho-beta-D-ribosyl)imidazole-4-carboxamido]succinate + ADP + phosphate + 2 H(+). It functions in the pathway purine metabolism; IMP biosynthesis via de novo pathway; 5-amino-1-(5-phospho-D-ribosyl)imidazole-4-carboxamide from 5-amino-1-(5-phospho-D-ribosyl)imidazole-4-carboxylate: step 1/2. The polypeptide is Phosphoribosylaminoimidazole-succinocarboxamide synthase (Shewanella frigidimarina (strain NCIMB 400)).